Consider the following 477-residue polypeptide: Protoporphyrinogen oxidase (477 aa).

Residues 9 to 14 (GGGISG), 34 to 35 (ES), Trp-42, 57 to 60 (GPRG), Val-257, Ala-449, and 454 to 456 (VAV) contribute to the FAD site.

The protein belongs to the protoporphyrinogen/coproporphyrinogen oxidase family. Protoporphyrinogen oxidase subfamily. As to quaternary structure, monomer. Homodimer. Requires FAD as cofactor. In terms of tissue distribution, expressed in heart, brain, placenta, lung, liver, skeletal muscle, kidney and pancreas.

Its subcellular location is the mitochondrion inner membrane. The catalysed reaction is protoporphyrinogen IX + 3 O2 = protoporphyrin IX + 3 H2O2. It functions in the pathway porphyrin-containing compound metabolism; protoporphyrin-IX biosynthesis; protoporphyrin-IX from protoporphyrinogen-IX: step 1/1. Its function is as follows. Catalyzes the 6-electron oxidation of protoporphyrinogen-IX to form protoporphyrin-IX. In Homo sapiens (Human), this protein is Protoporphyrinogen oxidase (PPOX).